A 122-amino-acid polypeptide reads, in one-letter code: Prefoldin subunit 1 (122 aa).

At Ala-2 the chain carries N-acetylalanine.

It belongs to the prefoldin subunit beta family. Heterohexamer of two PFD-alpha type and four PFD-beta type subunits.

Functionally, binds specifically to cytosolic chaperonin (c-CPN) and transfers target proteins to it. Binds to nascent polypeptide chain and promotes folding in an environment in which there are many competing pathways for nonnative proteins. This is Prefoldin subunit 1 (PFDN1) from Homo sapiens (Human).